A 55-amino-acid chain; its full sequence is Large ribosomal subunit protein bL33 (55 aa).

Belongs to the bacterial ribosomal protein bL33 family.

The protein is Large ribosomal subunit protein bL33 of Vibrio atlanticus (strain LGP32) (Vibrio splendidus (strain Mel32)).